Reading from the N-terminus, the 629-residue chain is Extracellular metalloproteinase 10 (629 aa).

Positions 1–19 are cleaved as a signal peptide; the sequence is MHGLLLAAGLLSLPLYTIA. Positions 20 to 240 are excised as a propeptide; that stretch reads HTQPSGALSR…VHNVVDYVAH (221 aa). 2 N-linked (GlcNAc...) asparagine glycosylation sites follow: asparagine 281 and asparagine 331. Histidine 424 lines the Zn(2+) pocket. Residue glutamate 425 is part of the active site. Histidine 428 contributes to the Zn(2+) binding site. N-linked (GlcNAc...) asparagine glycosylation is found at asparagine 469 and asparagine 617.

It belongs to the peptidase M36 family. Zn(2+) is required as a cofactor.

It is found in the secreted. Secreted metalloproteinase that allows assimilation of proteinaceous substrates and probably acts as a virulence factor. The chain is Extracellular metalloproteinase 10 (MEP10) from Coccidioides posadasii (strain C735) (Valley fever fungus).